Here is a 204-residue protein sequence, read N- to C-terminus: Large ribosomal subunit protein uL13 (204 aa).

Belongs to the universal ribosomal protein uL13 family.

The chain is Large ribosomal subunit protein uL13 (RpL13A) from Choristoneura parallela (Spotted fireworm moth).